Consider the following 298-residue polypeptide: MRRYHKMEKIGEGTYGVVYKAQNNHGEICALKKIRVEEEDEGIPSTAIREISLLKELHHPNIVWLRDVIHSEKCLTLVFEYLDQDLKKLLDACDGGLEPTTAKSFLYQILRGISYCHDHRILHRDLKPQNLLINREGVLKLADFGLARAFAIPVRSYTHEVVTLWYRAPDVLMGSKKYSTAVDIWSVGCIFAEMINGVPLFPGISEQDQLKRIFKILGTPSVDSWPQVVNLPAYNPDFSYYEKQSWSSIVPKLNESGIDLISRMLQLDPVQRISAKEALKHDYFKDLHRPPEFLNGVH.

The region spanning 4-284 is the Protein kinase domain; that stretch reads YHKMEKIGEG…AKEALKHDYF (281 aa). Residues 10 to 18 and Lys-32 contribute to the ATP site; that span reads IGEGTYGVV. At Thr-14 the chain carries Phosphothreonine. Tyr-15 carries the post-translational modification Phosphotyrosine. The active-site Proton acceptor is the Asp-125. Thr-158 bears the Phosphothreonine mark.

This sequence belongs to the protein kinase superfamily. CMGC Ser/Thr protein kinase family. CDC2/CDKX subfamily. In terms of assembly, may form a complex composed of at least the catalytic subunit CRK2 and a cyclin. It depends on Mg(2+) as a cofactor.

It is found in the cytoplasm. It carries out the reaction L-seryl-[protein] + ATP = O-phospho-L-seryl-[protein] + ADP + H(+). The enzyme catalyses L-threonyl-[protein] + ATP = O-phospho-L-threonyl-[protein] + ADP + H(+). It catalyses the reaction [DNA-directed RNA polymerase] + ATP = phospho-[DNA-directed RNA polymerase] + ADP + H(+). Phosphorylation at Thr-14 or Tyr-15 inactivates the enzyme, while phosphorylation at Thr-158 activates it. In terms of biological role, serine/threonine-protein kinase. Involved in the control of the cell cycle. Required for entry into S-phase and mitosis. Probable component of the kinase complex that phosphorylates the repetitive C-terminus of RNA polymerase II. This is Cyclin-dependent kinase 2 homolog from Theileria parva (East coast fever infection agent).